The sequence spans 406 residues: Argininosuccinate synthase (406 aa).

ATP-binding positions include 10–18 (AYSGGLDTS) and Ala37. Residues Tyr88 and Ser93 each coordinate L-citrulline. Gly118 serves as a coordination point for ATP. L-aspartate-binding residues include Thr120, Asn124, and Asp125. An L-citrulline-binding site is contributed by Asn124. L-citrulline contacts are provided by Arg128, Ser179, Ser188, Glu264, and Tyr276.

Belongs to the argininosuccinate synthase family. Type 1 subfamily. As to quaternary structure, homotetramer.

The protein localises to the cytoplasm. The enzyme catalyses L-citrulline + L-aspartate + ATP = 2-(N(omega)-L-arginino)succinate + AMP + diphosphate + H(+). The protein operates within amino-acid biosynthesis; L-arginine biosynthesis; L-arginine from L-ornithine and carbamoyl phosphate: step 2/3. The protein is Argininosuccinate synthase of Roseobacter denitrificans (strain ATCC 33942 / OCh 114) (Erythrobacter sp. (strain OCh 114)).